Here is a 328-residue protein sequence, read N- to C-terminus: UPF0104 membrane protein AF_2231 (328 aa).

Helical transmembrane passes span 31 to 51, 116 to 136, 139 to 159, 221 to 241, 245 to 265, and 277 to 297; these read NWLL…LWAL, ILDS…TGFS, FGFK…YILY, LVTL…LVAL, AYFL…LVPL, and MAYL…VGLW.

Belongs to the UPF0104 family.

The protein localises to the cell membrane. The protein is UPF0104 membrane protein AF_2231 of Archaeoglobus fulgidus (strain ATCC 49558 / DSM 4304 / JCM 9628 / NBRC 100126 / VC-16).